An 887-amino-acid polypeptide reads, in one-letter code: Alanine--tRNA ligase (887 aa).

Zn(2+) contacts are provided by His-564, His-568, Cys-676, and His-680. The interval 854 to 873 (GQGGGGRPDMAQSGGPKGNK) is disordered.

It belongs to the class-II aminoacyl-tRNA synthetase family. Requires Zn(2+) as cofactor.

It localises to the cytoplasm. The enzyme catalyses tRNA(Ala) + L-alanine + ATP = L-alanyl-tRNA(Ala) + AMP + diphosphate. In terms of biological role, catalyzes the attachment of alanine to tRNA(Ala) in a two-step reaction: alanine is first activated by ATP to form Ala-AMP and then transferred to the acceptor end of tRNA(Ala). Also edits incorrectly charged Ser-tRNA(Ala) and Gly-tRNA(Ala) via its editing domain. In Bartonella henselae (strain ATCC 49882 / DSM 28221 / CCUG 30454 / Houston 1) (Rochalimaea henselae), this protein is Alanine--tRNA ligase.